Consider the following 235-residue polypeptide: Leucyl/phenylalanyl-tRNA--protein transferase (235 aa).

This sequence belongs to the L/F-transferase family.

The protein localises to the cytoplasm. The enzyme catalyses N-terminal L-lysyl-[protein] + L-leucyl-tRNA(Leu) = N-terminal L-leucyl-L-lysyl-[protein] + tRNA(Leu) + H(+). The catalysed reaction is N-terminal L-arginyl-[protein] + L-leucyl-tRNA(Leu) = N-terminal L-leucyl-L-arginyl-[protein] + tRNA(Leu) + H(+). It carries out the reaction L-phenylalanyl-tRNA(Phe) + an N-terminal L-alpha-aminoacyl-[protein] = an N-terminal L-phenylalanyl-L-alpha-aminoacyl-[protein] + tRNA(Phe). Functions in the N-end rule pathway of protein degradation where it conjugates Leu, Phe and, less efficiently, Met from aminoacyl-tRNAs to the N-termini of proteins containing an N-terminal arginine or lysine. This Azoarcus sp. (strain BH72) protein is Leucyl/phenylalanyl-tRNA--protein transferase.